Here is a 389-residue protein sequence, read N- to C-terminus: Methylthioribose-1-phosphate isomerase (389 aa).

The active-site Proton donor is the D258.

This sequence belongs to the eIF-2B alpha/beta/delta subunits family. MtnA subfamily.

It localises to the cytoplasm. The protein resides in the nucleus. The enzyme catalyses 5-(methylsulfanyl)-alpha-D-ribose 1-phosphate = 5-(methylsulfanyl)-D-ribulose 1-phosphate. It participates in amino-acid biosynthesis; L-methionine biosynthesis via salvage pathway; L-methionine from S-methyl-5-thio-alpha-D-ribose 1-phosphate: step 1/6. Its function is as follows. Catalyzes the interconversion of methylthioribose-1-phosphate (MTR-1-P) into methylthioribulose-1-phosphate (MTRu-1-P). This Chaetomium globosum (strain ATCC 6205 / CBS 148.51 / DSM 1962 / NBRC 6347 / NRRL 1970) (Soil fungus) protein is Methylthioribose-1-phosphate isomerase.